We begin with the raw amino-acid sequence, 386 residues long: Bifunctional desaturase/conjugase FADX (386 aa).

The interval 1–28 (MGAGGRMSVAPNNSKCEKKESRSVKRVP) is disordered. 2 helical membrane-spanning segments follow: residues 65–85 (LSFIFYSIATTYFHLLPSPIT) and 87–107 (IAWPVYWAFQGCILTSVWVLG). The Histidine box-1 signature appears at 108 to 112 (HECGH). Positions 144 to 148 (HRRHH) match the Histidine box-2 motif. 3 helical membrane passes run 182–202 (ALTLVATLFIGWPLYLAFNVS), 228–248 (IYISDAMIFVAAYVLYKIAMA), and 250–270 (GLAWLVCIYGVPLLIVNALVV). A Histidine box-3 motif is present at residues 318-322 (HVIHH).

Belongs to the fatty acid desaturase type 1 family. In terms of tissue distribution, expressed exclusively in developing seeds.

The protein localises to the endoplasmic reticulum membrane. It catalyses the reaction a (9Z,12Z)-octadecadienoyl-containing glycerolipid + 2 Fe(II)-[cytochrome b5] + O2 + 2 H(+) = a (9Z,11E,13E)-octadecatrienoyl-containing glycerolipid + 2 Fe(III)-[cytochrome b5] + 2 H2O. It carries out the reaction (9Z,12Z,15Z)-octadecatrienoyl-containing glycerolipid + 2 Fe(II)-[cytochrome b5] + O2 + 2 H(+) = a (9Z,11E,13E,15Z)-octadecatetraenoyl-containing glycerolipid + 2 Fe(III)-[cytochrome b5] + 2 H2O. The enzyme catalyses a (9Z)-octadecenoyl-containing glycerolipid + 2 Fe(II)-[cytochrome b5] + O2 + 2 H(+) = a (9Z,12E)-octadecadienoyl-containing glycerolipid + 2 Fe(III)-[cytochrome b5] + 2 H2O. The catalysed reaction is a (9Z)-hexadecenoyl-containing glycerolipid + 2 Fe(II)-[cytochrome b5] + O2 + 2 H(+) = a (9Z,12E)-hexadecadienoyl-containing glycerolipid + 2 Fe(III)-[cytochrome b5] + 2 H2O. It functions in the pathway lipid metabolism; polyunsaturated fatty acid biosynthesis. Functionally, converts linoleic acid to alpha-eleostearic acid (18:3(9Z,11E,13E)) and alpha-linolenic acid to alpha-parinaric acid (18:4(9Z,11E,13E,15Z)). Converts a single cis double bond at carbon 12 to two conjugated trans bonds at positions 11 and 13. Can also act as a 12(E) desaturase when acting on the monounsaturated fatty acids oleate and palmitoleate, stereoselectively introducing a trans double bond. This chain is Bifunctional desaturase/conjugase FADX, found in Vernicia fordii (Tung).